The chain runs to 159 residues: RNA pyrophosphohydrolase (159 aa).

The region spanning glycine 6–lysine 149 is the Nudix hydrolase domain. Positions glycine 38–glycine 59 match the Nudix box motif.

It belongs to the Nudix hydrolase family. RppH subfamily. The cofactor is a divalent metal cation.

Accelerates the degradation of transcripts by removing pyrophosphate from the 5'-end of triphosphorylated RNA, leading to a more labile monophosphorylated state that can stimulate subsequent ribonuclease cleavage. This chain is RNA pyrophosphohydrolase, found in Pseudomonas savastanoi pv. phaseolicola (strain 1448A / Race 6) (Pseudomonas syringae pv. phaseolicola (strain 1448A / Race 6)).